Consider the following 534-residue polypeptide: NAD(P)H-quinone oxidoreductase chain 4 (534 aa).

14 helical membrane-spanning segments follow: residues Phe-12–Phe-32, Phe-44–Phe-64, Met-96–Val-116, Pro-120–Val-140, Leu-144–Trp-164, Phe-176–Phe-196, Ile-220–His-240, Thr-251–Leu-271, Phe-285–Phe-305, Ile-314–Ser-334, Ala-340–Ala-360, Phe-384–Val-404, Val-425–Met-445, and Val-472–Val-492.

Belongs to the complex I subunit 4 family.

It localises to the cellular thylakoid membrane. The enzyme catalyses a plastoquinone + NADH + (n+1) H(+)(in) = a plastoquinol + NAD(+) + n H(+)(out). It catalyses the reaction a plastoquinone + NADPH + (n+1) H(+)(in) = a plastoquinol + NADP(+) + n H(+)(out). NDH-1 shuttles electrons from NAD(P)H, via FMN and iron-sulfur (Fe-S) centers, to quinones in the respiratory chain. The immediate electron acceptor for the enzyme in this species is believed to be plastoquinone. Couples the redox reaction to proton translocation (for every two electrons transferred, four hydrogen ions are translocated across the cytoplasmic membrane), and thus conserves the redox energy in a proton gradient. In Prochlorococcus marinus (strain MIT 9215), this protein is NAD(P)H-quinone oxidoreductase chain 4.